The sequence spans 292 residues: Large ribosomal subunit protein bL19m (292 aa).

The disordered stretch occupies residues serine 41 to proline 60. Serine 77 bears the Phosphoserine mark.

The protein belongs to the bacterial ribosomal protein bL19 family. As to quaternary structure, component of the mitochondrial ribosome large subunit (39S) which comprises a 16S rRNA and about 50 distinct proteins.

It localises to the mitochondrion. This chain is Large ribosomal subunit protein bL19m (Mrpl19), found in Mus musculus (Mouse).